The sequence spans 802 residues: Pyrophosphate-energized membrane proton pump 2 (802 aa).

6 consecutive transmembrane segments (helical) span residues Val45 to Ser65, Pro66 to Thr86, Tyr118 to Phe138, Val160 to Val180, Ala206 to Tyr226, and Leu246 to Leu266. Lys273 provides a ligand contact to substrate. Asp276, Asp280, and Asp306 together coordinate Mg(2+). 5 helical membrane passes run Phe348–Leu368, Met386–Ala406, Trp421–Ile441, Ile468–Val488, and Gly511–Leu531. Residues Asp541 and Asn568 each contribute to the Mg(2+) site. The next 4 membrane-spanning stretches (helical) occupy residues Phe577–Val597, Val615–Ala635, Gly686–Tyr706, and Val716–Asn736. Mg(2+) contacts are provided by Asp743 and Asp773. Lys776 contacts substrate. A helical membrane pass occupies residues Ser782–Leu802.

Belongs to the H(+)-translocating pyrophosphatase (TC 3.A.10) family. K(+)-insensitive subfamily. Monomer. Ubiquitous. Mostly expressed in cotyledons, roots and flowers. Especially high levels in trichomes, sepals and stamen filaments.

It is found in the golgi apparatus membrane. The catalysed reaction is diphosphate + H2O + H(+)(in) = 2 phosphate + 2 H(+)(out). Its activity is regulated as follows. Activated by Mg(+) but not by K(+). Inhibited by Ca(2+). Functionally, pyrophosphatase active in both inorganic pyrophosphate hydrolysis and H(+) translocation. This is Pyrophosphate-energized membrane proton pump 2 (AVPL1) from Arabidopsis thaliana (Mouse-ear cress).